Here is a 189-residue protein sequence, read N- to C-terminus: Putative manganese efflux pump MntP (189 aa).

The next 6 membrane-spanning stretches (helical) occupy residues 3-23 (LSAT…ASIG), 41-61 (LIFG…GLFA), 65-85 (IMEW…MRMI), 103-123 (GFWL…AIGV), 132-152 (IVHT…LGMM), and 167-187 (ILGG…HLGY).

This sequence belongs to the MntP (TC 9.B.29) family.

The protein localises to the cell inner membrane. Its function is as follows. Probably functions as a manganese efflux pump. The polypeptide is Putative manganese efflux pump MntP (Serratia proteamaculans (strain 568)).